The following is a 376-amino-acid chain: Palmitoyltransferase PFA4 (376 aa).

The Cytoplasmic portion of the chain corresponds to 1–11; sequence MPVKLKWPWLG. The chain crosses the membrane as a helical span at residues 12–32; it reads IAIPSFLIASIGYCAHYFILL. Over 33–40 the chain is Lumenal; it reads NFLSLRKQ. Residues 41–61 traverse the membrane as a helical segment; the sequence is LWYQFCQTMIWLSYYLAIYTP. At 62 to 122 the chain is on the cytoplasmic side; it reads PGKPPTNFKP…NCVGYNNFPH (61 aa). The DHHC domain maps to 78 to 128; that stretch reads VYCKKCKCYKPERSHHCKTCNQCVLMMDHHCPWTMNCVGYNNFPHFIRFLF. Cys108 acts as the S-palmitoyl cysteine intermediate in catalysis. Residues 123-143 form a helical membrane-spanning segment; it reads FIRFLFWVIVGTTSLAIFLTT. At 144–163 the chain is on the lumenal side; sequence RIHSIWVHRSSPSYLYYKSE. The helical transmembrane segment at 164–184 threads the bilayer; it reads LIFLTILTPLNAFILLTISIL. The Cytoplasmic portion of the chain corresponds to 185-376; that stretch reads MIRCLFNQIF…EDFGVDVDVE (192 aa).

The protein belongs to the DHHC palmitoyltransferase family. PFA4 subfamily.

It localises to the endoplasmic reticulum membrane. The enzyme catalyses L-cysteinyl-[protein] + hexadecanoyl-CoA = S-hexadecanoyl-L-cysteinyl-[protein] + CoA. Functionally, mediates the reversible addition of palmitate to target proteins, thereby regulating their membrane association and biological function. In Candida glabrata (strain ATCC 2001 / BCRC 20586 / JCM 3761 / NBRC 0622 / NRRL Y-65 / CBS 138) (Yeast), this protein is Palmitoyltransferase PFA4.